The primary structure comprises 208 residues: Ras-related protein Rab-6A (208 aa).

N-acetylserine is present on Ser-2. GTP-binding residues include Ser-23, Val-24, Gly-25, Lys-26, Thr-27, Ser-28, Asp-39, Asn-40, Tyr-42, and Thr-45. Residue Thr-27 coordinates Mg(2+). The Switch 1 motif lies at 32–50 (RFMYDSFDNTYQATIGIDF). Mg(2+) contacts are provided by Thr-45 and Asp-68. The Switch 2 signature appears at 69–88 (TAGQERFRSLIPSYIRDSTV). The GTP site is built by Gly-71, Asn-126, Lys-127, Asp-129, Ser-156, Ala-157, and Lys-158. At Ser-184 the chain carries Phosphoserine. 2 S-geranylgeranyl cysteine lipidation sites follow: Cys-206 and Cys-208. A Cysteine methyl ester modification is found at Cys-208.

This sequence belongs to the small GTPase superfamily. Rab family. As to quaternary structure, interacts with BICDL1; leads to its accumulation in the pericentrosomal region. Interacts with SCYL1BP1. Interacts with VSP52. Interacts with RABGAP1. Interacts with GCC2 (via its GRIP domain). Interacts with RAB6IP1 (via its RUN 1 domain). Interacts with TMF1. Interacts with CIMAP3. Interacts (GTP-bound) with APBA1/MINT1 isoform 3, also called Mint1_826, but not with isoform 1. Interacts with RIC1; the interaction is direct with a preference for RAB6A-GDP. Interacts with RGP1; the interaction is direct with a preference for RAB6A-GDP. Interacts (GTP-bound) with DYNLRB1; the interaction is direct. Interacts with BICD1. Interacts with BICD2; the interaction is direct. Interacts (GTP-bound) with VPS13B. In terms of assembly, interacts with BICD1. Interacts (GDP-bound) with DYNLRB1; the interaction is direct. Interacts (GTP-bound) with VPS13B. Mg(2+) serves as cofactor. Post-translationally, prenylated.

It is found in the golgi apparatus membrane. The protein localises to the cytoplasmic vesicle. Its subcellular location is the secretory vesicle. The protein resides in the acrosome membrane. It catalyses the reaction GTP + H2O = GDP + phosphate + H(+). Regulated by guanine nucleotide exchange factors (GEFs) which promote the exchange of bound GDP for free GTP. Regulated by GTPase activating proteins (GAPs) which increase the GTP hydrolysis activity. Inhibited by GDP dissociation inhibitors (GDIs). In terms of biological role, the small GTPases Rab are key regulators of intracellular membrane trafficking, from the formation of transport vesicles to their fusion with membranes. Rabs cycle between an inactive GDP-bound form and an active GTP-bound form that is able to recruit to membranes different sets of downstream effectors directly responsible for vesicle formation, movement, tethering and fusion. RAB6A acts as a regulator of COPI-independent retrograde transport from the Golgi apparatus towards the endoplasmic reticulum (ER). Has a low GTPase activity. Recruits VPS13B to the Golgi membrane. Plays a role in neuron projection development. This is Ras-related protein Rab-6A from Mus musculus (Mouse).